The primary structure comprises 397 residues: Acetate kinase 2 (397 aa).

Asn10 provides a ligand contact to Mg(2+). Lys17 contributes to the ATP binding site. Arg90 is a binding site for substrate. The active-site Proton donor/acceptor is Asp147. ATP contacts are provided by residues 207 to 211 (HLGNG), 281 to 283 (DAR), and 329 to 333 (GIGEN). Glu385 contacts Mg(2+).

The protein belongs to the acetokinase family. Homodimer. Mg(2+) serves as cofactor. Requires Mn(2+) as cofactor.

The protein localises to the cytoplasm. The catalysed reaction is acetate + ATP = acetyl phosphate + ADP. It functions in the pathway metabolic intermediate biosynthesis; acetyl-CoA biosynthesis; acetyl-CoA from acetate: step 1/2. Its function is as follows. Catalyzes the formation of acetyl phosphate from acetate and ATP. Can also catalyze the reverse reaction. The protein is Acetate kinase 2 of Vibrio parahaemolyticus serotype O3:K6 (strain RIMD 2210633).